The chain runs to 210 residues: Putative fructokinase-8 (210 aa).

Belongs to the carbohydrate kinase PfkB family.

It carries out the reaction D-fructose + ATP = D-fructose 6-phosphate + ADP + H(+). The protein operates within glycan biosynthesis; starch biosynthesis. May play an important role in maintaining the flux of carbon towards starch formation. This is Putative fructokinase-8 from Arabidopsis thaliana (Mouse-ear cress).